The primary structure comprises 320 residues: Acetaldehyde dehydrogenase 2 (320 aa).

C129 acts as the Acyl-thioester intermediate in catalysis. NAD(+)-binding positions include 160-168 (SAGPGTRAN) and N287.

Belongs to the acetaldehyde dehydrogenase family.

The enzyme catalyses acetaldehyde + NAD(+) + CoA = acetyl-CoA + NADH + H(+). This is Acetaldehyde dehydrogenase 2 from Burkholderia cenocepacia (strain ATCC BAA-245 / DSM 16553 / LMG 16656 / NCTC 13227 / J2315 / CF5610) (Burkholderia cepacia (strain J2315)).